The following is a 520-amino-acid chain: NADH-quinone oxidoreductase subunit N (520 aa).

14 consecutive transmembrane segments (helical) span residues 13–33 (ALLP…ASVW), 55–75 (FGVI…GDGA), 87–107 (GFRW…LMLL), 115–135 (AAFG…MMVL), 141–161 (LMFV…LAGV), 176–196 (FLLG…LFGA), 219–239 (FMSG…AAPF), 250–270 (APLP…FAVF), 285–305 (WHMG…VFAL), 313–333 (MLAY…IVGD), 339–359 (ALIF…GVLI), 383–403 (WLAI…VLGG), 425–445 (ILAV…LAVV), and 468–488 (SLIA…TPIM). Low complexity predominate over residues 494 to 508 (ATTTTSPTSNPAAPR). Residues 494-520 (ATTTTSPTSNPAAPRGEVRLQTASVPR) form a disordered region.

Belongs to the complex I subunit 2 family. NDH-1 is composed of 14 different subunits. Subunits NuoA, H, J, K, L, M, N constitute the membrane sector of the complex.

The protein localises to the cell inner membrane. The catalysed reaction is a quinone + NADH + 5 H(+)(in) = a quinol + NAD(+) + 4 H(+)(out). Functionally, NDH-1 shuttles electrons from NADH, via FMN and iron-sulfur (Fe-S) centers, to quinones in the respiratory chain. The immediate electron acceptor for the enzyme in this species is believed to be ubiquinone. Couples the redox reaction to proton translocation (for every two electrons transferred, four hydrogen ions are translocated across the cytoplasmic membrane), and thus conserves the redox energy in a proton gradient. This Gemmatimonas aurantiaca (strain DSM 14586 / JCM 11422 / NBRC 100505 / T-27) protein is NADH-quinone oxidoreductase subunit N.